An 833-amino-acid chain; its full sequence is pre-rRNA 2'-O-ribose RNA methyltransferase (833 aa).

5 residues coordinate S-adenosyl-L-methionine: Gly-57, Trp-59, Asp-77, Asp-93, and Asp-118. Catalysis depends on Lys-158, which acts as the Proton acceptor. 5 disordered regions span residues 323-349, 363-453, 475-640, 730-767, and 779-833; these read KLDNPDEEETEKPEEKKELTAEEMEEN, KKKR…DEYL, LDDV…SDED, LGKKMEKTRDKASSIVDNPEMSNREKSKAIEKLYSGTD, and IAKK…KNKK. Residues 336-386 adopt a coiled-coil conformation; that stretch reads EEKKELTAEEMEENLQEEMKEYLALVEKKKRKEKKRQNELKRKHQRKIELT. Residues 363-381 show a composition bias toward basic residues; sequence KKKRKEKKRQNELKRKHQR. Basic and acidic residues predominate over residues 382-396; it reads KIELTMHIPGDKIEE. Positions 423 to 441 are enriched in acidic residues; sequence SSDEFDSDDSDDDDDDDNN. Residues 455–485 adopt a coiled-coil conformation; that stretch reads QQLDEQYKLYQQRIRKKAAKLDDVKVKKDKI. The segment covering 475–486 has biased composition (basic and acidic residues); sequence LDDVKVKKDKIG. Acidic residues-rich tracts occupy residues 490–503 and 542–556; these read YNEDDEEFVEEQEE and SESEPEQDGDDDQDD. A compositionally biased stretch (basic and acidic residues) spans 557 to 566; sequence ENNKPIDISK. Composition is skewed to acidic residues over residues 605–614 and 626–640; these read DKDDQDDDDD and PVQEEVEYESDSDED. Basic and acidic residues-rich tracts occupy residues 732 to 741, 751 to 767, and 794 to 806; these read KKMEKTRDKA, SNREKSKAIEKLYSGTD, and KIVDKRMKKDLRA.

Belongs to the class I-like SAM-binding methyltransferase superfamily. RNA methyltransferase RlmE family. SPB1 subfamily.

Its subcellular location is the nucleus. The protein resides in the nucleolus. The enzyme catalyses a ribonucleotide in rRNA + S-adenosyl-L-methionine = a 2'-O-methylribonucleotide in rRNA + S-adenosyl-L-homocysteine + H(+). Functionally, RNA 2'-O-methyltransferase involved in the maturation of rRNA and in the biogenesis of ribosomal subunits. In Dictyostelium discoideum (Social amoeba), this protein is pre-rRNA 2'-O-ribose RNA methyltransferase (fsjC).